The sequence spans 146 residues: Large ribosomal subunit protein uL16c (146 aa).

This sequence belongs to the universal ribosomal protein uL16 family. In terms of assembly, part of the 50S ribosomal subunit.

It is found in the plastid. Its subcellular location is the chloroplast. The chain is Large ribosomal subunit protein uL16c from Angiopteris evecta (Mule's foot fern).